A 313-amino-acid chain; its full sequence is GTPase Era (313 aa).

Residues 20-187 (RSGFVALIGA…MDYLAETLPE (168 aa)) form the Era-type G domain. A G1 region spans residues 28–35 (GATNAGKS). 28 to 35 (GATNAGKS) serves as a coordination point for GTP. The tract at residues 54-58 (QTTRA) is G2. A G3 region spans residues 75–78 (DTPG). GTP is bound by residues 75-79 (DTPGI) and 137-140 (NKVD). Residues 137–140 (NKVD) form a G4 region. Positions 166 to 168 (ISA) are G5. A KH type-2 domain is found at 218-295 (LHQELPYASH…HLFLFVKVRE (78 aa)).

The protein belongs to the TRAFAC class TrmE-Era-EngA-EngB-Septin-like GTPase superfamily. Era GTPase family. In terms of assembly, monomer.

It is found in the cytoplasm. Its subcellular location is the cell inner membrane. In terms of biological role, an essential GTPase that binds both GDP and GTP, with rapid nucleotide exchange. Plays a role in 16S rRNA processing and 30S ribosomal subunit biogenesis and possibly also in cell cycle regulation and energy metabolism. The sequence is that of GTPase Era from Rhizobium meliloti (strain 1021) (Ensifer meliloti).